A 387-amino-acid polypeptide reads, in one-letter code: Exodeoxyribonuclease 7 large subunit (387 aa).

Belongs to the XseA family. As to quaternary structure, heterooligomer composed of large and small subunits.

The protein localises to the cytoplasm. The enzyme catalyses Exonucleolytic cleavage in either 5'- to 3'- or 3'- to 5'-direction to yield nucleoside 5'-phosphates.. Functionally, bidirectionally degrades single-stranded DNA into large acid-insoluble oligonucleotides, which are then degraded further into small acid-soluble oligonucleotides. The protein is Exodeoxyribonuclease 7 large subunit of Campylobacter fetus subsp. fetus (strain 82-40).